We begin with the raw amino-acid sequence, 156 residues long: MGRSIFVNLGLLVVAFSLRGSEADCPSGWSSYDKYCYKVFDERKNWDEAESFCMEQKTGSHLASILSSEEGSYVANLAFKRVKHPSMWIGLSNIWNQCSWQWSDGSSLGYEAWVEGPDCVMMRLQPGFIDWYSVECKSTLPFTCKFLAKREDPAPE.

A signal peptide spans 1–23 (MGRSIFVNLGLLVVAFSLRGSEA). Disulfide bonds link Cys-25–Cys-36, Cys-53–Cys-144, and Cys-119–Cys-136. A C-type lectin domain is found at 32 to 145 (YDKYCYKVFD…CKSTLPFTCK (114 aa)).

The protein belongs to the snaclec family. Heterodimer of subunits A and B; disulfide-linked. Expressed by the venom gland.

It localises to the secreted. Interferes with one step of hemostasis (modulation of platelet aggregation, or coagulation cascade, for example). In Philodryas olfersii (Green snake), this protein is Snaclec subunit B.